The sequence spans 233 residues: Leucyl/phenylalanyl-tRNA--protein transferase (233 aa).

The protein belongs to the L/F-transferase family.

It localises to the cytoplasm. It catalyses the reaction N-terminal L-lysyl-[protein] + L-leucyl-tRNA(Leu) = N-terminal L-leucyl-L-lysyl-[protein] + tRNA(Leu) + H(+). It carries out the reaction N-terminal L-arginyl-[protein] + L-leucyl-tRNA(Leu) = N-terminal L-leucyl-L-arginyl-[protein] + tRNA(Leu) + H(+). The enzyme catalyses L-phenylalanyl-tRNA(Phe) + an N-terminal L-alpha-aminoacyl-[protein] = an N-terminal L-phenylalanyl-L-alpha-aminoacyl-[protein] + tRNA(Phe). Functions in the N-end rule pathway of protein degradation where it conjugates Leu, Phe and, less efficiently, Met from aminoacyl-tRNAs to the N-termini of proteins containing an N-terminal arginine or lysine. This chain is Leucyl/phenylalanyl-tRNA--protein transferase, found in Anaeromyxobacter dehalogenans (strain 2CP-C).